Consider the following 413-residue polypeptide: Putative F-box protein At3g58820 (413 aa).

The 48-residue stretch at 1–48 (MDGVSSLPNELLCHILSFLTTKEAALTSILSKRWRNLIAFVPNLYIDD) folds into the F-box domain.

This chain is Putative F-box protein At3g58820, found in Arabidopsis thaliana (Mouse-ear cress).